The primary structure comprises 354 residues: Zinc finger protein 346 (354 aa).

4 Matrin-type zinc fingers span residues 34-64, 95-125, 165-195, and 232-262; these read TQCKVCSAVLISESQKLAHYQSRKHANKVRR, KCCPICNMTFSSPVVAESHYSGKTHIKNLRL, KFCKLCHATFNNPLMAEQHYAGKKHKKQETK, and FSCDTCNIVLNSIEQYQAHVSGAKHKNQLMS. Zn(2+)-binding residues include C36, C39, H52, H58, C97, C100, H113, and H119. Residues 263–343 are disordered; the sequence is MTPLSKEGPP…QPYVREDMMG (81 aa). Low complexity-rich tracts occupy residues 270-289 and 310-323; these read GPPAAGGPSALAGPPSTGGA and GPSSFGGLPPMGGL. Over residues 324–333 the composition is skewed to pro residues; sequence MPPPYPPPHS.

Its subcellular location is the nucleus. The protein resides in the cytoplasm. Its function is as follows. Binds preferentially to dsRNA, but also to RNA-DNA hybrids. The sequence is that of Zinc finger protein 346 from Xenopus tropicalis (Western clawed frog).